A 436-amino-acid polypeptide reads, in one-letter code: Septin-7 (436 aa).

Serine 2 carries the post-translational modification N-acetylserine. Tyrosine 29 bears the Phosphotyrosine mark. The Septin-type G domain occupies 46-315 (RGFEFTLMVV…ENYRSRKLAA (270 aa)). The interaction with SEPTIN12 stretch occupies residues 46-316 (RGFEFTLMVV…NYRSRKLAAV (271 aa)). The interval 56–63 (GESGLGKS) is G1 motif. 56 to 63 (GESGLGKS) is a binding site for GTP. Serine 76 bears the Phosphoserine mark. Residues threonine 89, glycine 115, and 194 to 202 (KADTLTPEE) contribute to the GTP site. A G3 motif region spans residues 112 to 115 (DTPG). A G4 motif region spans residues 193–196 (AKAD). The residue at position 227 (threonine 227) is a Phosphothreonine. 2 residues coordinate GTP: glycine 249 and arginine 264. The stretch at 331-436 (TKSPLAQMEE…EKNKKKGKIF (106 aa)) forms a coiled coil. Serine 333 is modified (phosphoserine). Residue lysine 372 is modified to N6-acetyllysine. Residues 377 to 409 (ELQRRHEQMKKNLEAQHKELEEKRRQFEEEKAN) show a composition bias toward basic and acidic residues. Positions 377–436 (ELQRRHEQMKKNLEAQHKELEEKRRQFEEEKANWEAQQRILEQQNSSRTLEKNKKKGKIF) are disordered. The residue at position 423 (serine 423) is a Phosphoserine. At threonine 425 the chain carries Phosphothreonine.

The protein belongs to the TRAFAC class TrmE-Era-EngA-EngB-Septin-like GTPase superfamily. Septin GTPase family. Septins polymerize into heterooligomeric protein complexes that form filaments, and associate with cellular membranes, actin filaments and microtubules. GTPase activity is required for filament formation. Filaments are assembled from asymmetrical heterotrimers, composed of SEPTIN2, SEPTIN6 and SEPTIN7 that associate head-to-head to form a hexameric unit. Within the trimer, directly interacts with SEPTIN6, while interaction with SEPTIN2 seems indirect. In the absence of SEPTIN6, forms homodimers. Interacts directly with CENPE and links CENPE to septin filaments composed of SEPTIN2, SEPTIN6 and SEPTIN7. Interacts with SEPTIN8, SEPTIN9 and SEPTIN11. Component of a septin core octameric complex consisting of SEPTIN12, SEPTIN7, SEPTIN6 and SEPTIN2 or SEPTIN4 in the order 12-7-6-2-2-6-7-12 or 12-7-6-4-4-6-7-12 and located in the sperm annulus; the SEPTIN12:SEPTIN7 association is mediated by the respective GTP-binding domains. Interacts with SEPTIN2 and SEPTIN5. In terms of tissue distribution, expressed in the cerebral cortex (at protein level).

The protein resides in the cytoplasm. It is found in the chromosome. The protein localises to the centromere. Its subcellular location is the kinetochore. It localises to the cytoskeleton. The protein resides in the spindle. It is found in the cleavage furrow. The protein localises to the midbody. Its subcellular location is the cilium axoneme. It localises to the cell projection. The protein resides in the cilium. It is found in the flagellum. Its function is as follows. Filament-forming cytoskeletal GTPase. Required for normal organization of the actin cytoskeleton. Required for normal progress through mitosis. Involved in cytokinesis. Required for normal association of CENPE with the kinetochore. Plays a role in ciliogenesis and collective cell movements. Forms a filamentous structure with SEPTIN12, SEPTIN6, SEPTIN2 and probably SEPTIN4 at the sperm annulus which is required for the structural integrity and motility of the sperm tail during postmeiotic differentiation. The chain is Septin-7 from Mus musculus (Mouse).